A 34-amino-acid polypeptide reads, in one-letter code: Photosystem II reaction center protein M (34 aa).

Residues 7 to 27 (GFIATILFVLVPTVFLLILYI) form a helical membrane-spanning segment.

It belongs to the PsbM family. PSII is composed of 1 copy each of membrane proteins PsbA, PsbB, PsbC, PsbD, PsbE, PsbF, PsbH, PsbI, PsbJ, PsbK, PsbL, PsbM, PsbT, PsbX, PsbY, PsbZ, Psb30/Ycf12, peripheral proteins PsbO, CyanoQ (PsbQ), PsbU, PsbV and a large number of cofactors. It forms dimeric complexes.

Its subcellular location is the cellular thylakoid membrane. Its function is as follows. One of the components of the core complex of photosystem II (PSII). PSII is a light-driven water:plastoquinone oxidoreductase that uses light energy to abstract electrons from H(2)O, generating O(2) and a proton gradient subsequently used for ATP formation. It consists of a core antenna complex that captures photons, and an electron transfer chain that converts photonic excitation into a charge separation. This subunit is found at the monomer-monomer interface. The chain is Photosystem II reaction center protein M from Picosynechococcus sp. (strain ATCC 27264 / PCC 7002 / PR-6) (Agmenellum quadruplicatum).